The primary structure comprises 326 residues: HTH-type transcriptional regulator SyrM (326 aa).

In terms of domain architecture, HTH lysR-type spans 32–89; the sequence is IDLNLLVDLEALLQYRHITQAAQHVGRSQPAMSRALSRLRGMLKDDLLVAGSRGLVLT. The segment at residues 49–68 is a DNA-binding region (H-T-H motif); the sequence is ITQAAQHVGRSQPAMSRALS.

The protein belongs to the LysR transcriptional regulatory family.

Its function is as follows. Acts in trans to stimulate nod gene expression via nodD3 and exo gene expression via SyrA. The sequence is that of HTH-type transcriptional regulator SyrM (syrM) from Rhizobium meliloti (strain 1021) (Ensifer meliloti).